Consider the following 589-residue polypeptide: Guanylate-binding protein 2 (589 aa).

The segment at 1–309 is GTPase domain (Globular); it reads MASEIHMLQP…GAISSGSLPC (309 aa). Positions 35 to 276 constitute a GB1/RHD3-type G domain; the sequence is NQPVVVVAIV…FTSYIFSYSA (242 aa). Residues 45-52, 181-182, and L245 contribute to the GTP site; these read GLYRTGKS and RD. Position 586 is a cysteine methyl ester (C586). C586 is lipidated: S-geranylgeranyl cysteine. Residues 587–589 constitute a propeptide, removed in mature form; that stretch reads TIL.

This sequence belongs to the TRAFAC class dynamin-like GTPase superfamily. GB1/RHD3 GTPase family. GB1 subfamily. Homodimer; homodimerization occurs upon GTP-binding and is required for the association with membranous structures. Heterodimer with other family members, including GBP1, GBP3, GBP4 and GBP5. Post-translationally, isoprenylation is required for proper subcellular location. In terms of tissue distribution, widely expressed.

The protein resides in the cytoplasmic vesicle membrane. It localises to the golgi apparatus membrane. It is found in the cytoplasm. Its subcellular location is the perinuclear region. The enzyme catalyses GTP + H2O = GDP + phosphate + H(+). In terms of biological role, interferon (IFN)-inducible GTPase that plays important roles in innate immunity against a diverse range of bacterial, viral and protozoan pathogens. Hydrolyzes GTP to GMP in 2 consecutive cleavage reactions, but the major reaction product is GDP. Following infection, recruited to the pathogen-containing vacuoles or vacuole-escaped bacteria and acts as a positive regulator of inflammasome assembly by promoting the release of inflammasome ligands from bacteria. Acts by promoting lysis of pathogen-containing vacuoles, releasing pathogens into the cytosol. Following pathogen release in the cytosol, promotes recruitment of proteins that mediate bacterial cytolysis: this liberates ligands that are detected by inflammasomes, such as lipopolysaccharide (LPS) that activates the non-canonical CASP4/CASP11 inflammasome or double-stranded DNA (dsDNA) that activates the AIM2 inflammasome. Confers protection to the protozoan pathogen Toxoplasma gondii. Independently of its GTPase activity, acts as an inhibitor of various viruses infectivity by inhibiting FURIN-mediated maturation of viral envelope proteins. The chain is Guanylate-binding protein 2 (Gbp2) from Rattus norvegicus (Rat).